The primary structure comprises 179 residues: Large ribosomal subunit protein uL5 (179 aa).

This sequence belongs to the universal ribosomal protein uL5 family. Part of the 50S ribosomal subunit; part of the 5S rRNA/L5/L18/L25 subcomplex. Contacts the 5S rRNA and the P site tRNA. Forms a bridge to the 30S subunit in the 70S ribosome.

Functionally, this is one of the proteins that bind and probably mediate the attachment of the 5S RNA into the large ribosomal subunit, where it forms part of the central protuberance. In the 70S ribosome it contacts protein S13 of the 30S subunit (bridge B1b), connecting the 2 subunits; this bridge is implicated in subunit movement. Contacts the P site tRNA; the 5S rRNA and some of its associated proteins might help stabilize positioning of ribosome-bound tRNAs. This is Large ribosomal subunit protein uL5 from Shewanella amazonensis (strain ATCC BAA-1098 / SB2B).